A 250-amino-acid chain; its full sequence is Ribonuclease PH (250 aa).

Phosphate-binding positions include Arg87 and 125–127; that span reads GTR.

This sequence belongs to the RNase PH family. Homohexameric ring arranged as a trimer of dimers.

It catalyses the reaction tRNA(n+1) + phosphate = tRNA(n) + a ribonucleoside 5'-diphosphate. Functionally, phosphorolytic 3'-5' exoribonuclease that plays an important role in tRNA 3'-end maturation. Removes nucleotide residues following the 3'-CCA terminus of tRNAs; can also add nucleotides to the ends of RNA molecules by using nucleoside diphosphates as substrates, but this may not be physiologically important. Probably plays a role in initiation of 16S rRNA degradation (leading to ribosome degradation) during starvation. The chain is Ribonuclease PH from Moorella thermoacetica (strain ATCC 39073 / JCM 9320).